Here is a 266-residue protein sequence, read N- to C-terminus: Gasdermin bGSDM (266 aa).

A lipid anchor (S-palmitoyl cysteine) is attached at Cys3. The next 4 membrane-spanning stretches (beta stranded) occupy residues 69-85 (ISGQRTGDLSVGVGLSI), 97-115 (KLGLDTKYQNAKTTMFEFQ), 163-180 (KFTIEAKKSDGTALELTI), and 189-205 (GNVKVSGAASVTSKICY).

The protein belongs to the bacterial gasdermin family. As to quaternary structure, monomer. Forms large, homooligomeric ring-shaped pores when inserted in membranes. In terms of processing, palmitoylation helps stabilize the inactive state; may self palmitoylate. Palmitoylation plays a significant role in pore formation.

It localises to the cytoplasm. The protein localises to the cell inner membrane. Its activity is regulated as follows. The full-length protein before cleavage is inactive: intramolecular interactions between the N-terminal domain and the C-terminal region as well as the lipid modification, mediate autoinhibition. The pyroptosis-like-inducing activity is carried by the released N-terminal domain (Gasdermin bGSDM, N-terminus). Precursor of a pore-forming protein involved in defense against bacteriophages. Expression of bGSDM and the neighboring protease gene (Ga0182885_104520) is toxic in E.coli. Cleavage of this precursor by its dedicated protease releases the active moiety (gasdermin bGSDM, N-terminus) which inserts into membranes, forming pores and triggering cell death. In terms of biological role, pore-forming protein that causes membrane permeabilization via a pyroptosis-like activity. Makes ring-like pores when released. The sequence is that of Gasdermin bGSDM from Desulfuromonadales bacterium.